Consider the following 548-residue polypeptide: Beta-lactamase-like protein 2 (548 aa).

Positions 1–24 are cleaved as a signal peptide; sequence MKIMNKQSITIFLIICFLINLILS. Residues Asn237, Asn258, Asn443, and Asn459 are each glycosylated (N-linked (GlcNAc...) asparagine).

This sequence belongs to the beta-lactamase family.

The protein resides in the secreted. This chain is Beta-lactamase-like protein 2, found in Dictyostelium discoideum (Social amoeba).